The sequence spans 194 residues: Imidazoleglycerol-phosphate dehydratase (194 aa).

The protein belongs to the imidazoleglycerol-phosphate dehydratase family.

Its subcellular location is the cytoplasm. It carries out the reaction D-erythro-1-(imidazol-4-yl)glycerol 3-phosphate = 3-(imidazol-4-yl)-2-oxopropyl phosphate + H2O. The protein operates within amino-acid biosynthesis; L-histidine biosynthesis; L-histidine from 5-phospho-alpha-D-ribose 1-diphosphate: step 6/9. In Ruminiclostridium cellulolyticum (strain ATCC 35319 / DSM 5812 / JCM 6584 / H10) (Clostridium cellulolyticum), this protein is Imidazoleglycerol-phosphate dehydratase.